Consider the following 904-residue polypeptide: Pyrimidine pathway regulatory protein 1 (904 aa).

Basic residues predominate over residues methionine 1–serine 11. Positions methionine 1–isoleucine 27 are disordered. The segment covering asparagine 12 to aspartate 21 has biased composition (basic and acidic residues). Cysteine 34, cysteine 37, cysteine 44, cysteine 51, cysteine 54, and cysteine 61 together coordinate Zn(2+). Positions cysteine 34–cysteine 61 form a DNA-binding region, zn(2)-C6 fungal-type. Residues glycine 883 to phenylalanine 904 are disordered.

As to quaternary structure, binds DNA as a homodimer.

It localises to the nucleus. Functionally, positive regulator of URA1 and URA3 expression. The protein is Pyrimidine pathway regulatory protein 1 (PPR1) of Saccharomyces cerevisiae (strain ATCC 204508 / S288c) (Baker's yeast).